The sequence spans 226 residues: PKHD-type hydroxylase PP_0862 (226 aa).

In terms of domain architecture, Fe2OG dioxygenase spans 78-178 (KVFPPLINCY…RYAAFFWTQS (101 aa)). Fe cation is bound by residues H96, D98, and H159. R169 is a binding site for 2-oxoglutarate.

Fe(2+) is required as a cofactor. It depends on L-ascorbate as a cofactor.

In Pseudomonas putida (strain ATCC 47054 / DSM 6125 / CFBP 8728 / NCIMB 11950 / KT2440), this protein is PKHD-type hydroxylase PP_0862.